A 456-amino-acid chain; its full sequence is Bifunctional protein GlmU (456 aa).

The tract at residues 1–229 (MLNSAMSVVI…ISETDGVNNR (229 aa)) is pyrophosphorylase. UDP-N-acetyl-alpha-D-glucosamine is bound by residues 11-14 (LAAG), Lys25, Gln76, 81-82 (GT), 103-105 (YGD), Gly140, Glu154, Asn169, and Asn227. Asp105 contributes to the Mg(2+) binding site. Residue Asn227 coordinates Mg(2+). Residues 230–250 (LQLSRLERIYQAEQAEKLLLS) are linker. The tract at residues 251-456 (GVMLRDPARF…QGWQRPVKKK (206 aa)) is N-acetyltransferase. UDP-N-acetyl-alpha-D-glucosamine is bound by residues Arg333 and Lys351. Catalysis depends on His363, which acts as the Proton acceptor. UDP-N-acetyl-alpha-D-glucosamine-binding residues include Tyr366 and Asn377. Acetyl-CoA contacts are provided by residues Ala380, 386-387 (NY), Ser405, Ala423, and Arg440.

It in the N-terminal section; belongs to the N-acetylglucosamine-1-phosphate uridyltransferase family. The protein in the C-terminal section; belongs to the transferase hexapeptide repeat family. In terms of assembly, homotrimer. The cofactor is Mg(2+).

It is found in the cytoplasm. The enzyme catalyses alpha-D-glucosamine 1-phosphate + acetyl-CoA = N-acetyl-alpha-D-glucosamine 1-phosphate + CoA + H(+). It catalyses the reaction N-acetyl-alpha-D-glucosamine 1-phosphate + UTP + H(+) = UDP-N-acetyl-alpha-D-glucosamine + diphosphate. The protein operates within nucleotide-sugar biosynthesis; UDP-N-acetyl-alpha-D-glucosamine biosynthesis; N-acetyl-alpha-D-glucosamine 1-phosphate from alpha-D-glucosamine 6-phosphate (route II): step 2/2. It functions in the pathway nucleotide-sugar biosynthesis; UDP-N-acetyl-alpha-D-glucosamine biosynthesis; UDP-N-acetyl-alpha-D-glucosamine from N-acetyl-alpha-D-glucosamine 1-phosphate: step 1/1. Its pathway is bacterial outer membrane biogenesis; LPS lipid A biosynthesis. Its function is as follows. Catalyzes the last two sequential reactions in the de novo biosynthetic pathway for UDP-N-acetylglucosamine (UDP-GlcNAc). The C-terminal domain catalyzes the transfer of acetyl group from acetyl coenzyme A to glucosamine-1-phosphate (GlcN-1-P) to produce N-acetylglucosamine-1-phosphate (GlcNAc-1-P), which is converted into UDP-GlcNAc by the transfer of uridine 5-monophosphate (from uridine 5-triphosphate), a reaction catalyzed by the N-terminal domain. The protein is Bifunctional protein GlmU of Salmonella schwarzengrund (strain CVM19633).